Here is a 71-residue protein sequence, read N- to C-terminus: MSTKKTFEERLQELEAIVTRLENGDVPLEEAISEFQKGMVLSKDLQKTLQSAEKTLVKVMQADGTELEMDA.

The protein belongs to the XseB family. As to quaternary structure, heterooligomer composed of large and small subunits.

It localises to the cytoplasm. The enzyme catalyses Exonucleolytic cleavage in either 5'- to 3'- or 3'- to 5'-direction to yield nucleoside 5'-phosphates.. Bidirectionally degrades single-stranded DNA into large acid-insoluble oligonucleotides, which are then degraded further into small acid-soluble oligonucleotides. In Streptococcus equi subsp. zooepidemicus (strain H70), this protein is Exodeoxyribonuclease 7 small subunit.